The following is a 299-amino-acid chain: Oxygen-dependent coproporphyrinogen-III oxidase (299 aa).

Substrate is bound at residue serine 92. Positions 96 and 106 each coordinate a divalent metal cation. The active-site Proton donor is the histidine 106. 108–110 (NVR) contacts substrate. 2 residues coordinate a divalent metal cation: histidine 145 and histidine 175. An important for dimerization region spans residues 240–275 (YVEFNLVWDRGTLFGLQTGGRTESILMSMPPLVRWE). Residue 258 to 260 (GGR) participates in substrate binding.

This sequence belongs to the aerobic coproporphyrinogen-III oxidase family. Homodimer. It depends on a divalent metal cation as a cofactor.

Its subcellular location is the cytoplasm. The enzyme catalyses coproporphyrinogen III + O2 + 2 H(+) = protoporphyrinogen IX + 2 CO2 + 2 H2O. Its pathway is porphyrin-containing compound metabolism; protoporphyrin-IX biosynthesis; protoporphyrinogen-IX from coproporphyrinogen-III (O2 route): step 1/1. In terms of biological role, involved in the heme biosynthesis. Catalyzes the aerobic oxidative decarboxylation of propionate groups of rings A and B of coproporphyrinogen-III to yield the vinyl groups in protoporphyrinogen-IX. This chain is Oxygen-dependent coproporphyrinogen-III oxidase, found in Salmonella newport (strain SL254).